A 105-amino-acid polypeptide reads, in one-letter code: Pyruvate synthase subunit PorD (105 aa).

4Fe-4S ferredoxin-type domains follow at residues 44–73 (FKPE…LDEE) and 74–103 (GYPV…MVRE). Cysteine 53, cysteine 56, cysteine 59, cysteine 63, cysteine 83, cysteine 86, cysteine 89, and cysteine 93 together coordinate [4Fe-4S] cluster.

In terms of assembly, heterotetramer of one alpha, one beta, one delta and one gamma chain. Requires [4Fe-4S] cluster as cofactor.

In Pyrococcus furiosus (strain ATCC 43587 / DSM 3638 / JCM 8422 / Vc1), this protein is Pyruvate synthase subunit PorD (porD).